The sequence spans 1178 residues: Topoisomerase 1-associated factor 1 (1178 aa).

Disordered regions lie at residues 576-596 (KQDD…DEEL), 792-811 (SWES…PMIP), 896-965 (DARG…VLEE), and 980-1178 (KIKS…SDSE). Residues 580–596 (QAIDVEDEEHASEDEEL) show a composition bias toward acidic residues. Basic and acidic residues predominate over residues 896 to 905 (DARGGGRDEQ). The span at 911–921 (FGSDSEGEDNV) shows a compositional bias: acidic residues. Basic and acidic residues-rich tracts occupy residues 981–991 (IKSDLYIHASD), 1001–1015 (EFFR…EQAA), and 1025–1034 (VVEEISDKSS). A compositionally biased stretch (polar residues) spans 1079–1092 (EAQSPDSPGLGSSS). Over residues 1105–1116 (SDEDELEFDDDL) the composition is skewed to acidic residues. Residues 1117-1128 (AFSRDRNRRKDF) are compositionally biased toward basic and acidic residues. Residues 1138–1147 (EPAQQDADPA) are compositionally biased toward low complexity. Over residues 1148–1157 (APDEDDDEDA) the composition is skewed to acidic residues.

Belongs to the timeless family. Component of the fork protection complex (FPC) consisting of tof1 and csm3.

It localises to the nucleus. Its function is as follows. Forms a fork protection complex (FPC) with csm3 and which is required for chromosome segregation during meiosis and DNA damage repair. FPC coordinates leading and lagging strand synthesis and moves with the replication fork. FPC stabilizes replication forks in a configuration that is recognized by replication checkpoint sensors. The chain is Topoisomerase 1-associated factor 1 (tof1) from Aspergillus clavatus (strain ATCC 1007 / CBS 513.65 / DSM 816 / NCTC 3887 / NRRL 1 / QM 1276 / 107).